Consider the following 371-residue polypeptide: Caytaxin (371 aa).

The tract at residues 1-54 (MGTTEATLRMENVDVKEEWQDEDLPRPLPEETGVELLGSPVEDTSSPPNTLNFN) is disordered. Residues 11-29 (ENVDVKEEWQDEDLPRPLP) show a composition bias toward basic and acidic residues. Over residues 42–53 (EDTSSPPNTLNF) the composition is skewed to polar residues. The tract at residues 115–120 (ELEWGD) is required for interaction with KLC1. Residues 171 to 328 (IRPYMKVVTH…CVLQYEEERL (158 aa)) enclose the CRAL-TRIO domain. Positions 190 to 371 (AIIVFAACFL…VTEDQETSMS (182 aa)) are mediates interaction with GLS. Residues 331–371 (RRESARPQPEFVMPRSEEKPEVAPVENRSAPVTEDQETSMS) form a disordered region.

As to quaternary structure, interacts with KLC1; may link mitochondria to KLC1 and regulate mitochondria localization into neuron projections. Interacts with GLS; the interaction is direct and may control GLS localization, negatively regulating its activity. Interacts with PIN1 (via WW domain); upon NGF stimulation. The interaction with PIN1 and GLS is competitive. Cleaved by CASP3 and CASP7. The potential C-terminal product released by CASP3 cleavage may inhibit the ERK signaling pathway through MAP2K2. In terms of processing, may be ubiquitinated by STUB1.

It localises to the cell projection. Its subcellular location is the axon. The protein localises to the dendrite. It is found in the presynapse. The protein resides in the mitochondrion. It localises to the growth cone. Its subcellular location is the cytoplasm. Functions in the development of neural tissues, particularly the postnatal maturation of the cerebellar cortex. May play a role in neurotransmission through regulation of glutaminase/GLS, an enzyme responsible for the production in neurons of the glutamate neurotransmitter. Alternatively, may regulate the localization of mitochondria within axons and dendrites. This is Caytaxin (ATCAY) from Macaca fascicularis (Crab-eating macaque).